Here is a 297-residue protein sequence, read N- to C-terminus: Malonyl-[acyl-carrier protein] O-methyltransferase (297 aa).

The protein belongs to the methyltransferase superfamily.

It catalyses the reaction malonyl-[ACP] + S-adenosyl-L-methionine = malonyl-[ACP] methyl ester + S-adenosyl-L-homocysteine. It functions in the pathway cofactor biosynthesis; biotin biosynthesis. Functionally, converts the free carboxyl group of a malonyl-thioester to its methyl ester by transfer of a methyl group from S-adenosyl-L-methionine (SAM). It allows to synthesize pimeloyl-ACP via the fatty acid synthetic pathway. The chain is Malonyl-[acyl-carrier protein] O-methyltransferase from Laribacter hongkongensis (strain HLHK9).